Here is a 317-residue protein sequence, read N- to C-terminus: Small glutamine-rich tetratricopeptide repeat-containing protein 2 (317 aa).

TPR repeat units lie at residues 14–48 (LKQA…KPEE), 83–116 (AEKL…DPTS), 118–150 (VYYS…DPHH), and 151–184 (ARAF…DPNN). Residues 198-215 (LNQPSDSSATSGADQART) show a composition bias toward polar residues. Disordered regions lie at residues 198–224 (LNQP…PDLG) and 298–317 (MNNN…PPPQ).

Belongs to the SGT family.

It localises to the cytoplasm. Its subcellular location is the nucleus. Co-chaperone that binds to the molecular chaperone Hsp70 and regulates Hsp70 ATPase activity. The chain is Small glutamine-rich tetratricopeptide repeat-containing protein 2 (sgt2) from Schizosaccharomyces pombe (strain 972 / ATCC 24843) (Fission yeast).